The chain runs to 747 residues: Myotubularin-related protein 12 (747 aa).

Residues 1–14 are compositionally biased toward gly residues; that stretch reads MLGKGVVGGGGGTK. A disordered region spans residues 1–21; that stretch reads MLGKGVVGGGGGTKGPKPSFV. The 439-residue stretch at 205 to 643 folds into the Myotubularin phosphatase domain; the sequence is FDTLKDWCWE…PEIKVWAQRY (439 aa). Residues 449-558 form an interaction with MTM1 region; it reads VPVFLLFLDC…KGQRKGMRFK (110 aa). Phosphoserine occurs at positions 564, 601, and 716.

This sequence belongs to the protein-tyrosine phosphatase family. Non-receptor class myotubularin subfamily. Heterodimer with lipid phosphatase MTM1. Heterodimer with lipid phosphatase MTMR2.

The protein localises to the cytoplasm. It is found in the sarcoplasmic reticulum. Its subcellular location is the myofibril. The protein resides in the sarcomere. Functionally, acts as an adapter for the myotubularin-related phosphatases. Regulates phosphatase MTM1 protein stability and possibly its intracellular location. By stabilizing MTM1 protein levels, required for skeletal muscle maintenance but not for myogenesis. The protein is Myotubularin-related protein 12 (MTMR12) of Pongo abelii (Sumatran orangutan).